A 567-amino-acid chain; its full sequence is Type 2 DNA topoisomerase 6 subunit B (567 aa).

Residues N46, D78, 99–100 (TK), 109–116 (GQQGIGIS), and K472 each bind ATP.

This sequence belongs to the TOP6B family. Homodimer. Heterotetramer of two Top6A and two Top6B chains.

It carries out the reaction ATP-dependent breakage, passage and rejoining of double-stranded DNA.. Functionally, relaxes both positive and negative superturns and exhibits a strong decatenase activity. The sequence is that of Type 2 DNA topoisomerase 6 subunit B from Thermococcus kodakarensis (strain ATCC BAA-918 / JCM 12380 / KOD1) (Pyrococcus kodakaraensis (strain KOD1)).